Consider the following 79-residue polypeptide: uncharacterized protein (79 aa).

A signal peptide spans 1–33 (MRLSIRAIVLFALVWIGLLMSGYGVLVGSKVNA).

This is an uncharacterized protein from Salmonella paratyphi A (strain ATCC 9150 / SARB42).